The following is a 235-amino-acid chain: 15,16-dihydrobiliverdin:ferredoxin oxidoreductase (235 aa).

The protein belongs to the HY2 family.

The catalysed reaction is 15,16-dihydrobiliverdin + oxidized 2[4Fe-4S]-[ferredoxin] = biliverdin IXalpha + reduced 2[4Fe-4S]-[ferredoxin] + 2 H(+). Catalyzes the two-electron reduction of biliverdin IX-alpha at the C15 methine bridge. The chain is 15,16-dihydrobiliverdin:ferredoxin oxidoreductase from Synechococcus sp. (strain CC9902).